Here is a 295-residue protein sequence, read N- to C-terminus: Succinate dehydrogenase assembly factor 2, mitochondrial (295 aa).

Disordered stretches follow at residues 35 to 90, 208 to 227, and 269 to 295; these read AKDN…PELL, PEEGTPAEDTPTETWQRTGA, and TGFHAAKNKKTGGSGLGRMPNIQVFDS. Residues 45 to 75 show a composition bias toward polar residues; that stretch reads STPSTAPEYRQNQTSKPPNQFMPNSTSTMTN.

Belongs to the SDHAF2 family. Interacts with the flavoprotein subunit within the SDH catalytic dimer.

The protein localises to the mitochondrion matrix. In terms of biological role, plays an essential role in the assembly of succinate dehydrogenase (SDH), an enzyme complex (also referred to as respiratory complex II) that is a component of both the tricarboxylic acid (TCA) cycle and the mitochondrial electron transport chain, and which couples the oxidation of succinate to fumarate with the reduction of ubiquinone (coenzyme Q) to ubiquinol. Required for flavinylation (covalent attachment of FAD) of the flavoprotein subunit of the SDH catalytic dimer. The chain is Succinate dehydrogenase assembly factor 2, mitochondrial from Aspergillus terreus (strain NIH 2624 / FGSC A1156).